The following is a 277-amino-acid chain: Homeobox protein Nkx-6.2 (277 aa).

The segment at 89–142 (AGVYFGPAAAVARGYPKPLAELPGRPPIFWPGVVQGAPWRDPRLAGPAPAGGVL) is repressor domain. Disordered stretches follow at residues 132–155 (LAGP…RPTF) and 210–250 (EMAS…DDEK). The segment at residues 148 to 207 (KKHSRPTFSGQQIFALEKTFEQTKYLAGPERARLAYSLGMTESQVKVWFQNRRTKWRKRH) is a DNA-binding region (homeobox). Over residues 216-226 (KKQDSDAEKLK) the composition is skewed to basic and acidic residues.

In terms of tissue distribution, highest expression in brain.

Its subcellular location is the nucleus. In terms of biological role, transcription factor with repressor activity involved in the regulation of axon-glial interactions at myelin paranodes in oligodendrocytes. Binds to the consensus DNA sequence 5'-(A/T)TTAATGA-3'. In oligodendrocytes, binds to MBP and PLP1 promoter regions. The polypeptide is Homeobox protein Nkx-6.2 (NKX6-2) (Homo sapiens (Human)).